The sequence spans 152 residues: Nucleoside diphosphate kinase A (152 aa).

Residues Lys12, Phe60, Arg88, and Thr94 each coordinate ATP. Residue Lys100 forms a Glycyl lysine isopeptide (Lys-Gly) (interchain with G-Cter in ubiquitin) linkage. Residues Arg105 and Asn115 each coordinate ATP. The active-site Pros-phosphohistidine intermediate is the His118. A phosphoserine mark is found at Ser120, Ser122, and Ser125.

Belongs to the NDK family. In terms of assembly, hexamer of two different chains: An and B (A6, A5B, A4B2, A3B3, A2B4, AB5, B6). Interacts with PRUNE1. Component of the SET complex, composed of at least ANP32A, APEX1, HMGB2, NME1, SET and TREX1. Within this complex, interacts directly with SET. Also interacts with TREX1, but only following translocation to the nucleus. The cofactor is Mg(2+).

It localises to the cytoplasm. The protein resides in the nucleus. The catalysed reaction is a 2'-deoxyribonucleoside 5'-diphosphate + ATP = a 2'-deoxyribonucleoside 5'-triphosphate + ADP. It carries out the reaction a ribonucleoside 5'-diphosphate + ATP = a ribonucleoside 5'-triphosphate + ADP. Its activity is regulated as follows. Autophosphorylation at His-118 increases serine/threonine protein kinase activity of the enzyme. Interaction with the SET complex inhibits exonuclease activity. Major role in the synthesis of nucleoside triphosphates other than ATP. The ATP gamma phosphate is transferred to the NDP beta phosphate via a ping-pong mechanism, using a phosphorylated active-site intermediate. Possesses nucleoside-diphosphate kinase, serine/threonine-specific protein kinase, geranyl and farnesyl pyrophosphate kinase, histidine protein kinase and 3'-5' exonuclease activities. Involved in cell proliferation, differentiation and development, signal transduction, G protein-coupled receptor endocytosis, and gene expression. Required for neural development including neural patterning and cell fate determination. During GZMA-mediated cell death, works in concert with TREX1. NME1 nicks one strand of DNA and TREX1 removes bases from the free 3' end to enhance DNA damage and prevent DNA end reannealing and rapid repair. This Rattus norvegicus (Rat) protein is Nucleoside diphosphate kinase A (Nme1).